The sequence spans 141 residues: Large ribosomal subunit protein uL16 (141 aa).

The tract at residues 1–20 is disordered; it reads MLMPKRTKYRKQQKGRNRGK.

This sequence belongs to the universal ribosomal protein uL16 family. In terms of assembly, part of the 50S ribosomal subunit.

Binds 23S rRNA and is also seen to make contacts with the A and possibly P site tRNAs. The protein is Large ribosomal subunit protein uL16 of Nautilia profundicola (strain ATCC BAA-1463 / DSM 18972 / AmH).